The sequence spans 1502 residues: Leucine-rich repeat-containing protein 9 (1502 aa).

LRR repeat units lie at residues 53 to 79 (FPNL…HFLK), 97 to 119 (CADL…LENL), 120 to 141 (LKLE…LDMM), 142 to 164 (QNLK…LDPN), 166 to 188 (QLER…NLAR), 224 to 247 (LQRL…TVVK), 296 to 320 (EHEL…KFHE), 699 to 721 (YSQI…ISRL), 722 to 744 (NGLR…SYLT), 746 to 764 (LEYL…GFKG), 765 to 790 (LGKL…ILRK), 792 to 814 (AIQL…VLKD), 822 to 849 (LTHL…RITQ), 894 to 916 (YTKI…LEKL), 917 to 938 (VNLR…LEHC), 939 to 960 (VNLE…LSKL), 961 to 983 (TKLR…VIES), 985 to 1009 (SHLH…GYKL), 1011 to 1030 (ELYL…SLKG), 1031 to 1053 (LNNL…NYRL), 1100 to 1123 (FTEL…PADH), 1124 to 1146 (FRNV…LIFL), 1147 to 1170 (PNIK…KSQS), 1209 to 1232 (MQSL…QLGR), 1234 to 1255 (RNLK…LENL), 1256 to 1278 (QFLR…SFAK), 1280 to 1301 (NSLV…LPPL), 1302 to 1325 (LKLR…KLEV), and 1327 to 1351 (PALV…LLVV). The segment at 317–342 (KFHENNCDTEESNSQQSSERRKNNSD) is disordered. Residues 1479–1496 (TQQSGQARSQQKHPFNQE) are compositionally biased toward polar residues. Residues 1479 to 1502 (TQQSGQARSQQKHPFNQENEGRCV) are disordered.

This is Leucine-rich repeat-containing protein 9 (lrrc9) from Xenopus tropicalis (Western clawed frog).